The primary structure comprises 497 residues: Glycerol kinase (497 aa).

Residue T12 coordinates ADP. ATP-binding residues include T12, T13, and S14. A sn-glycerol 3-phosphate-binding site is contributed by T12. R16 serves as a coordination point for ADP. 4 residues coordinate sn-glycerol 3-phosphate: R82, E83, Y133, and D243. Glycerol is bound by residues R82, E83, Y133, D243, and Q244. ADP is bound by residues T265 and G308. Positions 265, 308, 312, and 409 each coordinate ATP. G409 serves as a coordination point for ADP.

It belongs to the FGGY kinase family.

It catalyses the reaction glycerol + ATP = sn-glycerol 3-phosphate + ADP + H(+). It functions in the pathway polyol metabolism; glycerol degradation via glycerol kinase pathway; sn-glycerol 3-phosphate from glycerol: step 1/1. With respect to regulation, inhibited by fructose 1,6-bisphosphate (FBP). Functionally, key enzyme in the regulation of glycerol uptake and metabolism. Catalyzes the phosphorylation of glycerol to yield sn-glycerol 3-phosphate. This Dichelobacter nodosus (strain VCS1703A) protein is Glycerol kinase.